A 230-amino-acid chain; its full sequence is 5'-methylthioadenosine/S-adenosylhomocysteine nucleosidase (230 aa).

Catalysis depends on Glu12, which acts as the Proton acceptor. Substrate-binding positions include Gly78, Ile152, and 173 to 174 (ME). The active-site Proton donor is the Asp197.

Belongs to the PNP/UDP phosphorylase family. MtnN subfamily.

It carries out the reaction S-adenosyl-L-homocysteine + H2O = S-(5-deoxy-D-ribos-5-yl)-L-homocysteine + adenine. The catalysed reaction is S-methyl-5'-thioadenosine + H2O = 5-(methylsulfanyl)-D-ribose + adenine. It catalyses the reaction 5'-deoxyadenosine + H2O = 5-deoxy-D-ribose + adenine. Its pathway is amino-acid biosynthesis; L-methionine biosynthesis via salvage pathway; S-methyl-5-thio-alpha-D-ribose 1-phosphate from S-methyl-5'-thioadenosine (hydrolase route): step 1/2. Catalyzes the irreversible cleavage of the glycosidic bond in both 5'-methylthioadenosine (MTA) and S-adenosylhomocysteine (SAH/AdoHcy) to adenine and the corresponding thioribose, 5'-methylthioribose and S-ribosylhomocysteine, respectively. Also cleaves 5'-deoxyadenosine, a toxic by-product of radical S-adenosylmethionine (SAM) enzymes, into 5-deoxyribose and adenine. The chain is 5'-methylthioadenosine/S-adenosylhomocysteine nucleosidase from Actinobacillus succinogenes (strain ATCC 55618 / DSM 22257 / CCUG 43843 / 130Z).